A 467-amino-acid chain; its full sequence is Serine decarboxylase 2 (467 aa).

His-178 contacts substrate. Lys-290 carries the N6-(pyridoxal phosphate)lysine modification.

Belongs to the group II decarboxylase family. The cofactor is pyridoxal 5'-phosphate.

It catalyses the reaction L-serine + H(+) = ethanolamine + CO2. Functionally, catalyzes the biosynthesis of ethanolamine from serine. Decarboxylation of free serine is the major source of ethanolamine production in plants and ethanolamine metabolism is crucial for the synthesis of choline, phosphatidylethanolamine (PE) and phosphatidylcholine (PC), and thus for plant growth. The chain is Serine decarboxylase 2 from Oryza sativa subsp. japonica (Rice).